We begin with the raw amino-acid sequence, 182 residues long: ATP-dependent protease subunit HslV (182 aa).

T10 is an active-site residue. Residues A166, C169, and S172 each contribute to the Na(+) site.

Belongs to the peptidase T1B family. HslV subfamily. A double ring-shaped homohexamer of HslV is capped on each side by a ring-shaped HslU homohexamer. The assembly of the HslU/HslV complex is dependent on binding of ATP.

The protein resides in the cytoplasm. The enzyme catalyses ATP-dependent cleavage of peptide bonds with broad specificity.. Allosterically activated by HslU binding. In terms of biological role, protease subunit of a proteasome-like degradation complex believed to be a general protein degrading machinery. This chain is ATP-dependent protease subunit HslV, found in Rickettsia typhi (strain ATCC VR-144 / Wilmington).